We begin with the raw amino-acid sequence, 235 residues long: Phosphoribosylaminoimidazole-succinocarboxamide synthase (235 aa).

This sequence belongs to the SAICAR synthetase family.

The enzyme catalyses 5-amino-1-(5-phospho-D-ribosyl)imidazole-4-carboxylate + L-aspartate + ATP = (2S)-2-[5-amino-1-(5-phospho-beta-D-ribosyl)imidazole-4-carboxamido]succinate + ADP + phosphate + 2 H(+). It participates in purine metabolism; IMP biosynthesis via de novo pathway; 5-amino-1-(5-phospho-D-ribosyl)imidazole-4-carboxamide from 5-amino-1-(5-phospho-D-ribosyl)imidazole-4-carboxylate: step 1/2. The sequence is that of Phosphoribosylaminoimidazole-succinocarboxamide synthase from Clostridium perfringens (strain SM101 / Type A).